Here is a 120-residue protein sequence, read N- to C-terminus: UPF0344 protein lin2366 (120 aa).

Transmembrane regions (helical) follow at residues 3 to 23 (GYVH…ALLI), 33 to 53 (MLQM…IMMV), 62 to 82 (ILAI…EMLL), and 92 to 112 (GMFL…GFYL).

It belongs to the UPF0344 family.

The protein resides in the cell membrane. This is UPF0344 protein lin2366 from Listeria innocua serovar 6a (strain ATCC BAA-680 / CLIP 11262).